A 228-amino-acid chain; its full sequence is Endolytic peptidoglycan transglycosylase RlpA (228 aa).

Positions M1–T23 are cleaved as a signal peptide.

Belongs to the RlpA family.

Functionally, lytic transglycosylase with a strong preference for naked glycan strands that lack stem peptides. This chain is Endolytic peptidoglycan transglycosylase RlpA, found in Rickettsia felis (strain ATCC VR-1525 / URRWXCal2) (Rickettsia azadi).